The primary structure comprises 158 residues: MGIEGVLEKGFVTTSADKLINWARTGSLWPMTFGLACCAVEMMHAGASRYDLDRFGVVFRPSPRQSDVMIVAGTLVNKMAPALRKVYDQMAEPRWVISMGSCANGGGYYHYSYAVVRGCDRIVPVDIYVPGCPPTAEALLYGILQLQNKIRRTNTIAR.

Residues Cys-37, Cys-38, Cys-102, and Cys-132 each contribute to the [4Fe-4S] cluster site.

The protein belongs to the complex I 20 kDa subunit family. As to quaternary structure, NDH-1 is composed of 14 different subunits. Subunits NuoB, C, D, E, F, and G constitute the peripheral sector of the complex. It depends on [4Fe-4S] cluster as a cofactor.

It is found in the cell inner membrane. The enzyme catalyses a quinone + NADH + 5 H(+)(in) = a quinol + NAD(+) + 4 H(+)(out). NDH-1 shuttles electrons from NADH, via FMN and iron-sulfur (Fe-S) centers, to quinones in the respiratory chain. The immediate electron acceptor for the enzyme in this species is believed to be ubiquinone. Couples the redox reaction to proton translocation (for every two electrons transferred, four hydrogen ions are translocated across the cytoplasmic membrane), and thus conserves the redox energy in a proton gradient. In Thioalkalivibrio sulfidiphilus (strain HL-EbGR7), this protein is NADH-quinone oxidoreductase subunit B.